The primary structure comprises 453 residues: Venom prothrombin activator notecarin-D2 (453 aa).

A signal peptide spans 1–20 (MAPQLLLCLILTFLWSLPEA). A propeptide spanning residues 21–40 (ESNVFLKSKVANRFLQRTKR) is cleaved from the precursor. Residues 41-86 (SNSLFEEIRPGNIERECIEEKCSKEEAREVFEDNEKTETFWNVYVD) enclose the Gla domain. A 4-carboxyglutamate mark is found at Glu-46, Glu-47, Glu-54, Glu-56, Glu-59, Glu-60, Glu-65, Glu-66, Glu-69, Glu-72, and Glu-75. Residues Cys-57 and Cys-62 are joined by a disulfide bond. In terms of domain architecture, EGF-like 1; calcium-binding spans 86–122 (DGDQCSSNPCHYRGTCKDGIGSYTCTCLPNYEGKNCE). Cystine bridges form between Cys-90–Cys-101, Cys-95–Cys-110, Cys-112–Cys-121, Cys-129–Cys-140, Cys-136–Cys-149, Cys-151–Cys-164, Cys-172–Cys-326, Cys-216–Cys-221, Cys-236–Cys-252, Cys-374–Cys-388, and Cys-399–Cys-427. Residue Ser-92 is glycosylated (O-linked (Hex...) serine). The region spanning 129 to 164 (CRAFNGNCWHFCKRVQSETQCSCAESYLLGVDGHSC) is the EGF-like 2 domain. The propeptide at 182-209 (REASLPDFVQSQKATVLKKSDNPSPDIR) is activation peptide. Residues 210–451 (IVNGMDCKLG…FIPWIKKIMS (242 aa)) enclose the Peptidase S1 domain. The active-site Charge relay system is His-251. Asn-254 carries an N-linked (GlcNAc...) asparagine glycan. Asp-306 serves as the catalytic Charge relay system. Ser-403 functions as the Charge relay system in the catalytic mechanism.

The protein belongs to the peptidase S1 family. Snake venom subfamily. In terms of assembly, heterodimer of a light chain and a heavy chain; disulfide-linked. Post-translationally, gamma-carboxyglutamate residues are formed by vitamin K dependent carboxylation. These residues are essential for the binding of calcium. As to expression, expressed by the venom gland.

Its subcellular location is the secreted. It catalyses the reaction Selective cleavage of Arg-|-Thr and then Arg-|-Ile bonds in prothrombin to form thrombin.. Its function is as follows. Snake prothrombin activator that attacks the hemostatic system of prey. This protein is functionally similar to blood coagulation factor Xa. The polypeptide is Venom prothrombin activator notecarin-D2 (Notechis scutatus scutatus (Mainland tiger snake)).